Here is a 285-residue protein sequence, read N- to C-terminus: Probable endonuclease 4 (285 aa).

The Zn(2+) site is built by His-69, His-109, Glu-145, Asp-179, His-182, His-216, Asp-229, His-231, and Glu-261.

Belongs to the AP endonuclease 2 family. The cofactor is Zn(2+).

It catalyses the reaction Endonucleolytic cleavage to 5'-phosphooligonucleotide end-products.. Endonuclease IV plays a role in DNA repair. It cleaves phosphodiester bonds at apurinic or apyrimidinic (AP) sites, generating a 3'-hydroxyl group and a 5'-terminal sugar phosphate. The chain is Probable endonuclease 4 from Escherichia coli O127:H6 (strain E2348/69 / EPEC).